Here is a 462-residue protein sequence, read N- to C-terminus: DEK domain-containing chromatin-associated protein 1 (462 aa).

Disordered regions lie at residues A18–R91 and K212–L390. Over residues T20 to V32 the composition is skewed to basic and acidic residues. The span at E33–D46 shows a compositional bias: acidic residues. The span at P77 to R91 shows a compositional bias: polar residues. A compositionally biased stretch (acidic residues) spans N267 to E276. Composition is skewed to basic and acidic residues over residues E277 to K303, E312 to I322, and Q347 to K360. Residues S344–K351 carry the Nuclear localization signal motif. In terms of domain architecture, DEK-C spans E384 to N439. 2 DNA-binding regions span residues D402–G416 and K431–T435. The interval I438 to D462 is disordered. Residues M441–D462 are compositionally biased toward acidic residues.

Found in a mRNA splicing-dependent exon junction complex (EJC). Binds specifically histones H3 and H4.

The protein resides in the nucleus. The protein localises to the nucleolus. Its function is as follows. Chromatin-associated protein which contributes to the modulation of chromatin structure (such as super-helical structure of DNA) and function. Binds to chromatin of protein-coding genes throughout the genome to regulate nucleosome occupancy and chromatin accessibility, and to modulate the expression of target genes. The chain is DEK domain-containing chromatin-associated protein 1 from Arabidopsis thaliana (Mouse-ear cress).